Reading from the N-terminus, the 398-residue chain is tRNA-specific 2-thiouridylase MnmA (398 aa).

ATP contacts are provided by residues 20 to 27 (AMSGGVDS) and leucine 46. Residue cysteine 114 is the Nucleophile of the active site. Cysteine 114 and cysteine 210 form a disulfide bridge. Glycine 138 is a binding site for ATP. Residues 160–162 (RDQ) are interaction with tRNA. Residue cysteine 210 is the Cysteine persulfide intermediate of the active site.

The protein belongs to the MnmA/TRMU family.

It is found in the cytoplasm. The enzyme catalyses S-sulfanyl-L-cysteinyl-[protein] + uridine(34) in tRNA + AH2 + ATP = 2-thiouridine(34) in tRNA + L-cysteinyl-[protein] + A + AMP + diphosphate + H(+). Its function is as follows. Catalyzes the 2-thiolation of uridine at the wobble position (U34) of tRNA, leading to the formation of s(2)U34. This Brucella abortus (strain S19) protein is tRNA-specific 2-thiouridylase MnmA.